The primary structure comprises 205 residues: Ribosomal RNA small subunit methyltransferase G (205 aa).

Residues glycine 73, leucine 78, 124 to 125 (VE), and arginine 139 contribute to the S-adenosyl-L-methionine site.

The protein belongs to the methyltransferase superfamily. RNA methyltransferase RsmG family.

It localises to the cytoplasm. The catalysed reaction is guanosine(527) in 16S rRNA + S-adenosyl-L-methionine = N(7)-methylguanosine(527) in 16S rRNA + S-adenosyl-L-homocysteine. Its function is as follows. Specifically methylates the N7 position of guanine in position 527 of 16S rRNA. The sequence is that of Ribosomal RNA small subunit methyltransferase G from Methylobacillus flagellatus (strain ATCC 51484 / DSM 6875 / VKM B-1610 / KT).